The chain runs to 335 residues: Protein-arginine kinase (335 aa).

The Phosphagen kinase C-terminal domain occupies 20-243 (IVMSSRIRLA…QQIINEEMQI (224 aa)). ATP is bound by residues 23–27 (SSRIR), His-81, Arg-114, 165–169 (RASVM), and 196–201 (RGIYGE).

The protein belongs to the ATP:guanido phosphotransferase family.

The catalysed reaction is L-arginyl-[protein] + ATP = N(omega)-phospho-L-arginyl-[protein] + ADP + H(+). Functionally, catalyzes the specific phosphorylation of arginine residues in proteins. The chain is Protein-arginine kinase from Staphylococcus haemolyticus (strain JCSC1435).